A 66-amino-acid chain; its full sequence is Small ribosomal subunit protein bS21 (66 aa).

Belongs to the bacterial ribosomal protein bS21 family.

The protein is Small ribosomal subunit protein bS21 of Rickettsia peacockii (strain Rustic).